A 426-amino-acid polypeptide reads, in one-letter code: 3-phosphoshikimate 1-carboxyvinyltransferase (426 aa).

K22, S23, and R27 together coordinate 3-phosphoshikimate. K22 contributes to the phosphoenolpyruvate binding site. G96 and R124 together coordinate phosphoenolpyruvate. 3-phosphoshikimate-binding residues include S170, S171, Q172, S198, D314, N337, and K341. Q172 provides a ligand contact to phosphoenolpyruvate. The active-site Proton acceptor is the D314. 3 residues coordinate phosphoenolpyruvate: R345, R387, and K412.

The protein belongs to the EPSP synthase family. As to quaternary structure, monomer.

Its subcellular location is the cytoplasm. It catalyses the reaction 3-phosphoshikimate + phosphoenolpyruvate = 5-O-(1-carboxyvinyl)-3-phosphoshikimate + phosphate. It participates in metabolic intermediate biosynthesis; chorismate biosynthesis; chorismate from D-erythrose 4-phosphate and phosphoenolpyruvate: step 6/7. In terms of biological role, catalyzes the transfer of the enolpyruvyl moiety of phosphoenolpyruvate (PEP) to the 5-hydroxyl of shikimate-3-phosphate (S3P) to produce enolpyruvyl shikimate-3-phosphate and inorganic phosphate. The polypeptide is 3-phosphoshikimate 1-carboxyvinyltransferase (Vibrio atlanticus (strain LGP32) (Vibrio splendidus (strain Mel32))).